The sequence spans 436 residues: UPF0761 membrane protein Bxeno_A3061 (436 aa).

6 helical membrane passes run Leu-42–Phe-62, Gly-96–Val-116, Ile-136–Ile-156, Ala-180–Leu-200, Ala-210–Tyr-230, and Val-241–Ile-261.

It belongs to the UPF0761 family.

The protein localises to the cell inner membrane. The sequence is that of UPF0761 membrane protein Bxeno_A3061 from Paraburkholderia xenovorans (strain LB400).